The chain runs to 426 residues: Probable imidazolonepropionase (426 aa).

Positions 158 and 192 each coordinate 4-imidazolone-5-propanoate. Tyrosine 158 provides a ligand contact to N-formimidoyl-L-glutamate. Position 260 (histidine 260) interacts with Fe(3+). Position 260 (histidine 260) interacts with Zn(2+). Glutamate 263 serves as a coordination point for 4-imidazolone-5-propanoate. Aspartate 334 contributes to the Fe(3+) binding site. Zn(2+) is bound at residue aspartate 334. Asparagine 336 provides a ligand contact to N-formimidoyl-L-glutamate.

This sequence belongs to the metallo-dependent hydrolases superfamily. HutI family. Zn(2+) serves as cofactor. Fe(3+) is required as a cofactor.

It catalyses the reaction 4-imidazolone-5-propanoate + H2O = N-formimidoyl-L-glutamate. It functions in the pathway amino-acid degradation; L-histidine degradation into L-glutamate; N-formimidoyl-L-glutamate from L-histidine: step 3/3. The protein is Probable imidazolonepropionase (amdhd1) of Dictyostelium discoideum (Social amoeba).